An 843-amino-acid polypeptide reads, in one-letter code: Protein P (843 aa).

The segment at 1–177 is terminal protein domain (TP); that stretch reads MPLSYQHFRK…FCGSPYSWEQ (177 aa). Positions 178 to 346 are spacer; that stretch reads DLQHGRLVFQ…YCLCHIVNLI (169 aa). A disordered region spans residues 220–265; sequence QSRLGPQPAQGQLAGRQQGGSGSIRARVHPSPWGTVGVEPSGSGPT. Residues 223–235 are compositionally biased toward low complexity; that stretch reads LGPQPAQGQLAGR. The tract at residues 347 to 690 is polymerase/reverse transcriptase domain (RT); it reads EDWGPCTEHG…YLNLYPVARQ (344 aa). In terms of domain architecture, Reverse transcriptase spans 357–600; that stretch reads EHLIRTPRTP…YSLNFMGYVI (244 aa). Residues D429, D551, and D552 each contribute to the Mg(2+) site.

It belongs to the hepadnaviridae P protein family.

The enzyme catalyses DNA(n) + a 2'-deoxyribonucleoside 5'-triphosphate = DNA(n+1) + diphosphate. The catalysed reaction is Endonucleolytic cleavage to 5'-phosphomonoester.. Its activity is regulated as follows. Activated by host HSP70 and HSP40 in vitro to be able to bind the epsilon loop of the pgRNA. Because deletion of the RNase H region renders the protein partly chaperone-independent, the chaperones may be needed indirectly to relieve occlusion of the RNA-binding site by this domain. Inhibited by several reverse-transcriptase inhibitors: Lamivudine, Adefovir and Entecavir. Functionally, multifunctional enzyme that converts the viral RNA genome into dsDNA in viral cytoplasmic capsids. This enzyme displays a DNA polymerase activity that can copy either DNA or RNA templates, and a ribonuclease H (RNase H) activity that cleaves the RNA strand of RNA-DNA heteroduplexes in a partially processive 3'- to 5'-endonucleasic mode. Neo-synthesized pregenomic RNA (pgRNA) are encapsidated together with the P protein, and reverse-transcribed inside the nucleocapsid. Initiation of reverse-transcription occurs first by binding the epsilon loop on the pgRNA genome, and is initiated by protein priming, thereby the 5'-end of (-)DNA is covalently linked to P protein. Partial (+)DNA is synthesized from the (-)DNA template and generates the relaxed circular DNA (RC-DNA) genome. After budding and infection, the RC-DNA migrates in the nucleus, and is converted into a plasmid-like covalently closed circular DNA (cccDNA). The activity of P protein does not seem to be necessary for cccDNA generation, and is presumably released from (+)DNA by host nuclear DNA repair machinery. The chain is Protein P from Hepatitis B virus genotype B2 (isolate Vietnam/9873/1997) (HBV-B).